Here is a 198-residue protein sequence, read N- to C-terminus: CASP-like protein 4B3 (198 aa).

A disordered region spans residues 1-27 (MSSSGPPAGDGRDDASGPGPAGAAAAA). The Cytoplasmic portion of the chain corresponds to 1-51 (MSSSGPPAGDGRDDASGPGPAGAAAAADGSVPVSRSIVERWKMEPAAARAR). Low complexity predominate over residues 16-27 (SGPGPAGAAAAA). The chain crosses the membrane as a helical span at residues 52–72 (LLLRAVAWLFSLLALVVMASN). Residues 73–85 (KHGHGGAQDFDNY) lie on the Extracellular side of the membrane. A helical transmembrane segment spans residues 86-106 (PEYTYCLGISIIAVLYTTAQV). Over 107–124 (TRDVHRLSWGRDVIAGRK) the chain is Cytoplasmic. Residues 125-145 (AAAVVDFAGDQVVAYLLMSAL) traverse the membrane as a helical segment. Residues 146-166 (SAAAPVTDYMRQAADNLFTDS) lie on the Extracellular side of the membrane. Residues 167–187 (AAAAISMAFLAFLAAGLSALV) form a helical membrane-spanning segment. Topologically, residues 188 to 198 (SGYNLAMEVLV) are cytoplasmic.

The protein belongs to the Casparian strip membrane proteins (CASP) family. In terms of assembly, homodimer and heterodimers.

It is found in the cell membrane. The sequence is that of CASP-like protein 4B3 from Oryza sativa subsp. japonica (Rice).